The chain runs to 455 residues: MSTQSGGFTRTPGKDGLNPFDEDYVDLVRCMRNRGEHEEYTDLLDNVNTPRELLSAMESFEESSNEIPSQAATGVFAETGNRYDVPRSQDWDTMMKVVSAEEEMIEFLTEEFSAFIQKDCKNNSLEELIETVDEPKLVHSRTCIDEYYLTLILQNKAKETTDLKRPFPVSYQQMELCHKDALNSSERERSLDQFFRAVEPRMGILADQLCRRFENNTVNARRIYTTPLSLDQATDFVKWFTNRGELLIAEVRTLFGSMKQIKERKTTHKTLVEDTHPTTISESYRLDTDTAESQQSSQSESEREEENRRNRPSSSRHINTTRKRKSITTSKGVLTKKKSLKNQPRAISTYFTPADGTIMNAGASGGALTSIQGRIRQSLSTRSTPEHIRNIMFYNTKWPRSLCTSKWPTTEFEYVYRTESVCKESIQPKRHSNNWKRATIRMKVTFRTTVVTPTN.

Over residues 262-276 the composition is skewed to basic and acidic residues; it reads KERKTTHKTLVEDTH. Residues 262–341 form a disordered region; that stretch reads KERKTTHKTL…GVLTKKKSLK (80 aa).

The chain is Putative non-structural protein from Bombyx mori (Silk moth).